We begin with the raw amino-acid sequence, 343 residues long: Holliday junction branch migration complex subunit RuvB (343 aa).

Residues 1–181 (MDRIVEIEKV…FGMQFRLQFY (181 aa)) are large ATPase domain (RuvB-L). ATP is bound by residues Leu20, Arg21, Gly62, Lys65, Thr66, Thr67, 128–130 (EDF), Arg171, Tyr181, and Arg218. Thr66 is a Mg(2+) binding site. The tract at residues 182 to 252 (TDNELARIIS…RAKSSLDSLG (71 aa)) is small ATPAse domain (RuvB-S). The segment at 255-343 (DLGFDEMDLK…EKQNKGLFNE (89 aa)) is head domain (RuvB-H). Residues Arg308 and Arg313 each contribute to the DNA site.

This sequence belongs to the RuvB family. Homohexamer. Forms an RuvA(8)-RuvB(12)-Holliday junction (HJ) complex. HJ DNA is sandwiched between 2 RuvA tetramers; dsDNA enters through RuvA and exits via RuvB. An RuvB hexamer assembles on each DNA strand where it exits the tetramer. Each RuvB hexamer is contacted by two RuvA subunits (via domain III) on 2 adjacent RuvB subunits; this complex drives branch migration. In the full resolvosome a probable DNA-RuvA(4)-RuvB(12)-RuvC(2) complex forms which resolves the HJ.

It is found in the cytoplasm. It carries out the reaction ATP + H2O = ADP + phosphate + H(+). In terms of biological role, the RuvA-RuvB-RuvC complex processes Holliday junction (HJ) DNA during genetic recombination and DNA repair, while the RuvA-RuvB complex plays an important role in the rescue of blocked DNA replication forks via replication fork reversal (RFR). RuvA specifically binds to HJ cruciform DNA, conferring on it an open structure. The RuvB hexamer acts as an ATP-dependent pump, pulling dsDNA into and through the RuvAB complex. RuvB forms 2 homohexamers on either side of HJ DNA bound by 1 or 2 RuvA tetramers; 4 subunits per hexamer contact DNA at a time. Coordinated motions by a converter formed by DNA-disengaged RuvB subunits stimulates ATP hydrolysis and nucleotide exchange. Immobilization of the converter enables RuvB to convert the ATP-contained energy into a lever motion, pulling 2 nucleotides of DNA out of the RuvA tetramer per ATP hydrolyzed, thus driving DNA branch migration. The RuvB motors rotate together with the DNA substrate, which together with the progressing nucleotide cycle form the mechanistic basis for DNA recombination by continuous HJ branch migration. Branch migration allows RuvC to scan DNA until it finds its consensus sequence, where it cleaves and resolves cruciform DNA. The protein is Holliday junction branch migration complex subunit RuvB of Campylobacter fetus subsp. fetus (strain 82-40).